A 173-amino-acid polypeptide reads, in one-letter code: MEVILIKPVRKLGKIGEIHKVADGFGRNYLLPQKLAIRATELNKELIVKQKHELEEKDKQIKSEITKINDLIKDQKLIFVRQTSDDGKLFGSVNNKEIAKKLSQAVSYPISHLNIILDTQIKSTGIYKVEVRLHAELSTEVTVIVARSESEIQDYLREQKTEKSTTEPLAESA.

Belongs to the bacterial ribosomal protein bL9 family.

Its function is as follows. Binds to the 23S rRNA. The chain is Large ribosomal subunit protein bL9 from Rickettsia bellii (strain OSU 85-389).